A 130-amino-acid chain; its full sequence is Histone H2B (130 aa).

A disordered region spans residues 1–31 (MAKSARHVTGKAPSSLDAHDRKKSKKKSSSM). Residue Lys-122 forms a Glycyl lysine isopeptide (Lys-Gly) (interchain with G-Cter in ubiquitin) linkage.

This sequence belongs to the histone H2B family. The nucleosome is a histone octamer containing two molecules each of H2A, H2B, H3 and H4 assembled in one H3-H4 heterotetramer and two H2A-H2B heterodimers. The octamer wraps approximately 147 bp of DNA. In terms of processing, monoubiquitinated to form H2BK123ub1. H2BK123ub1 gives a specific tag for epigenetic transcriptional activation and is also prerequisite for H3K4me and H3K79me formation.

Its subcellular location is the nucleus. The protein localises to the chromosome. In terms of biological role, core component of nucleosome. Nucleosomes wrap and compact DNA into chromatin, limiting DNA accessibility to the cellular machineries which require DNA as a template. Histones thereby play a central role in transcription regulation, DNA repair, DNA replication and chromosomal stability. DNA accessibility is regulated via a complex set of post-translational modifications of histones, also called histone code, and nucleosome remodeling. The protein is Histone H2B (HTB1) of Encephalitozoon cuniculi (strain GB-M1) (Microsporidian parasite).